The sequence spans 1055 residues: Ephrin type-B receptor 2 (1055 aa).

A signal peptide spans 1-18 (MALRRLGAALLLLPLLAA). The Extracellular portion of the chain corresponds to 19-543 (VEETLMDSTT…QTSIQEKLPL (525 aa)). The region spanning 20-202 (EETLMDSTTA…FYRKCPRIIQ (183 aa)) is the Eph LBD domain. 2 disulfide bridges follow: Cys-62-Cys-184 and Cys-97-Cys-107. 4 N-linked (GlcNAc...) asparagine glycosylation sites follow: Asn-265, Asn-336, Asn-428, and Asn-482. 2 consecutive Fibronectin type-III domains span residues 324–434 (IPSA…TNQA) and 435–530 (APSA…TMTE). Residues 544–564 (IIGSSAAGLVFLIAVVVIAIV) traverse the membrane as a helical segment. Topologically, residues 565-1055 (CNRRGFERAD…KESNDCSCGG (491 aa)) are cytoplasmic. The 264-residue stretch at 621–884 (VKIEQVIGAG…QIVNTLDKMI (264 aa)) folds into the Protein kinase domain. ATP is bound by residues 627–635 (IGAGEFGEV) and Lys-653. Residue Asp-746 is the Proton acceptor of the active site. Lys-891 participates in a covalent cross-link: Glycyl lysine isopeptide (Lys-Gly) (interchain with G-Cter in ubiquitin). An SAM domain is found at 913-977 (TSFNTVDEWL…LNSIQVMRAQ (65 aa)). Ser-983 and Val-984 each carry phosphoserine. The PDZ-binding (in isoform 2) signature appears at 984 to 986 (VEG). A disordered region spans residues 990–1055 (ARRPRATGRT…KESNDCSCGG (66 aa)). Basic residues predominate over residues 991–1002 (RRPRATGRTKRC). A compositionally biased stretch (basic and acidic residues) spans 1025-1049 (KKTDPGRGREIQGIFFKEDSHKESN).

Belongs to the protein kinase superfamily. Tyr protein kinase family. Ephrin receptor subfamily. In terms of assembly, heterotetramer upon binding of the ligand. The heterotetramer is composed of an ephrin dimer and a receptor dimer. Interacts (via PDZ-binding motif) with GRIP1 and PICK1 (via PDZ domain). Interacts with ARHGEF15; mediates ARHGEF15 phosphorylation, ubiquitination and degradation by the proteasome. Interacts with AQP1; involved in endolymph production in the inner ear. Interacts with SPSB1 and SPSB4. The phosphorylated form interacts with RASA1 (via SH2 domain 1). Interacts with EFNA5. Interacts with SH2D3C. In terms of processing, autophosphorylated; ligand binding stimulates autophosphorylation on tyrosine residues. Polyubiquitinated; ligand binding stimulates ubiquitination. Ubiquitinated by RNF186 at Lys-891, mainly through 'Lys-27'-linked polyubiquitin chains. Ubiquitinated by CRL2(KLHDC2) E3 ligase complex. Post-translationally, ligand binding induces cleavage by matrix metalloproteinases (MMPs) such as MMP7/MMP9, producing an EphB2/N-terminal fragment (NTF) and a C-terminal long fragment (EphB2-LF). EphB2-LF is further cleaved by MMPs, producing EphB2/CTF1 which is further cleaved by the PS1/gamma-secretase producing EphB2/CTF2. Brain, heart, lung, kidney, placenta, pancreas, liver and skeletal muscle. Preferentially expressed in fetal brain.

Its subcellular location is the cell membrane. The protein localises to the cell projection. It is found in the axon. It localises to the dendrite. It carries out the reaction L-tyrosyl-[protein] + ATP = O-phospho-L-tyrosyl-[protein] + ADP + H(+). Receptor tyrosine kinase which binds promiscuously transmembrane ephrin-B family ligands residing on adjacent cells, leading to contact-dependent bidirectional signaling into neighboring cells. The signaling pathway downstream of the receptor is referred to as forward signaling while the signaling pathway downstream of the ephrin ligand is referred to as reverse signaling. Functions in axon guidance during development. Involved in the guidance of commissural axons, that form a major interhemispheric connection between the 2 temporal lobes of the cerebral cortex. Also involved in guidance of contralateral inner ear efferent growth cones at the midline and of retinal ganglion cell axons to the optic disk. In addition to axon guidance, also regulates dendritic spines development and maturation and stimulates the formation of excitatory synapses. Upon activation by EFNB1, abolishes the ARHGEF15-mediated negative regulation on excitatory synapse formation. Controls other aspects of development including angiogenesis, palate development and in inner ear development through regulation of endolymph production. Forward and reverse signaling through the EFNB2/EPHB2 complex regulate movement and adhesion of cells that tubularize the urethra and septate the cloaca. May function as a tumor suppressor. May be involved in the regulation of platelet activation and blood coagulation. In Homo sapiens (Human), this protein is Ephrin type-B receptor 2 (EPHB2).